The primary structure comprises 529 residues: Transcription factor kayak (529 aa).

The segment covering 118–134 (LQGTDSDNSNASWADAQ) has biased composition (polar residues). Disordered regions lie at residues 118–166 (LQGT…SVNG) and 180–239 (NAGR…CRKR). Composition is skewed to low complexity over residues 142–153 (TDTSSAHTDSTS) and 182–201 (GRGSTQGSNTNTSNSATPAR). Residues 219-282 (EEKRRIRRER…NQLEFFLRAH (64 aa)) enclose the bZIP domain. The basic motif stretch occupies residues 221–240 (KRRIRRERNKQAAARCRKRR). The segment at 247–275 (LTYEVEQLEKKRDGLKKEMETLTDVKNQL) is leucine-zipper. Disordered regions lie at residues 311-390 (AGSC…PMST) and 493-529 (DGGTGLTPVSGPLVPSQNKHPLELPTPTAEPSKLVSL). Low complexity predominate over residues 315–332 (DSGSSSHHNNNSNDSSNG). Over residues 340-350 (SLNSTGRSNSP) the composition is skewed to polar residues. Phosphoserine is present on Ser-349. The span at 363-375 (DGGLDSSCLLDQD) shows a compositional bias: low complexity. Residues 376–387 (GPPPSKRFPLPP) are compositionally biased toward pro residues.

This sequence belongs to the bZIP family. Fos subfamily. As to quaternary structure, homodimer. Heterodimer with Jra. The kay-Jra heterodimer binds more stably to the AP-1 site than either of the two proteins alone.

Its subcellular location is the nucleus. Functionally, developmentally regulated transcription factor AP-1 binds and recognizes the enhancer DNA sequence: 5'-TGA[CG]TCA-3'. May play a role in the function or determination of a particular subset of cells in the developing embryo. Is able to carry out its function either independently of or in conjunction with Jra. The chain is Transcription factor kayak from Drosophila ananassae (Fruit fly).